Consider the following 448-residue polypeptide: Protein Z-dependent protease inhibitor (448 aa).

The first 21 residues, 1–21, serve as a signal peptide directing secretion; the sequence is MRVASSLFLPVLLTEVWLVTS. The interval 33–70 is disordered; sequence VHLESQDYENQTWEEYTRTDPREEEEEEEEKEEGKDEE. Positions 54–63 are enriched in acidic residues; it reads REEEEEEEEK. N-linked (GlcNAc...) asparagine glycosylation occurs at N81. The heparin-binding stretch occupies residues 140-157; the sequence is AGPLILPALFKKVKETFS. N-linked (GlcNAc...) asparagine glycans are attached at residues N184, N278, and N299.

This sequence belongs to the serpin family. In terms of processing, phosphorylated by FAM20C in the extracellular medium. In terms of tissue distribution, detectable in liver, but not in heart, brain, spleen, lung, kidney, skeletal muscle or testes.

The protein localises to the secreted. Its function is as follows. Inhibits activity of the coagulation protease factor Xa in the presence of PROZ, calcium and phospholipids. Also inhibits factor XIa in the absence of cofactors. This Mus musculus (Mouse) protein is Protein Z-dependent protease inhibitor (Serpina10).